The primary structure comprises 840 residues: Phosphatidylglycerol lysyltransferase (840 aa).

The Cytoplasmic segment spans residues 1–8; the sequence is MTQELKSK. Residues 9–29 traverse the membrane as a helical segment; it reads LLSFFKFIFATALFIFVIFTL. The Extracellular segment spans residues 30–52; that stretch reads YRELSHINFKETFIQFGKINRLW. The chain crosses the membrane as a helical span at residues 53 to 73; the sequence is LVLLFAGGGLSLILLSLYDII. Over 74-89 the chain is Cytoplasmic; that stretch reads LVKALKLKMPLIRVFR. The helical transmembrane segment at 90-110 threads the bilayer; sequence VSYIINALNSIIGFGGFIGAG. Residues 111–129 are Extracellular-facing; that stretch reads VRAFVYKNYTNDTKKLVQY. A helical membrane pass occupies residues 130–150; that stretch reads ISIILVSMLTGLSLLSILVVL. The Cytoplasmic segment spans residues 151 to 161; it reads RIFNASHMIDE. A helical transmembrane segment spans residues 162 to 182; sequence ISWVRWILYIVALFLPIFIFY. Residues 183 to 200 lie on the Extracellular side of the membrane; sequence TVARPVDRNNRYMGVYCT. A helical membrane pass occupies residues 201–221; sequence VVSCVEWMAAATVLYFAALIV. Topologically, residues 222–229 are cytoplasmic; sequence DIHISFMT. The helical transmembrane segment at 230-250 threads the bilayer; sequence FVGIFVIAALSGLVSFIPGGF. Topologically, residues 251–270 are extracellular; the sequence is GAFDLVVLLGLKSLGISEEK. Residues 271 to 291 form a helical membrane-spanning segment; it reads ILLALVLYRFAYYFVPVMIAL. Topologically, residues 292–337 are cytoplasmic; it reads ILSSFEFGNTAKKYLDNSKYFIPVKDFTSFLRSYQKDILAKVPSFS. A helical membrane pass occupies residues 338–358; sequence LAILIFLTSIIFFINNLTIVY. Topologically, residues 359–366 are extracellular; the sequence is DGLYDGNH. The helical transmembrane segment at 367-387 threads the bilayer; it reads FAYYIALAIQTSACLLLILNV. The Cytoplasmic segment spans residues 388-392; sequence RGIYK. A helical membrane pass occupies residues 393 to 413; sequence GSRRAIIYAFISIILIASATI. The Extracellular portion of the chain corresponds to 414-415; the sequence is YT. The helical transmembrane segment at 416-436 threads the bilayer; sequence YASFLLLSWLIIIFVLLILAY. At 437–450 the chain is on the cytoplasmic side; the sequence is QRAQVLKRPLRFKK. A helical membrane pass occupies residues 451–471; the sequence is LAFMLLLSIFILYLNHILISG. Topologically, residues 472 to 489 are extracellular; the sequence is TLYALDVYHIEIDTSLLR. The chain crosses the membrane as a helical span at residues 490-510; the sequence is YYFWMTIVIIMLLVGVIAWLF. Topologically, residues 511–840 are cytoplasmic; it reads DYKYKRPHHS…LKVMRVIRHK (330 aa).

It belongs to the LPG synthase family.

The protein resides in the cell membrane. The enzyme catalyses L-lysyl-tRNA(Lys) + a 1,2-diacyl-sn-glycero-3-phospho-(1'-sn-glycerol) = a 1,2-diacyl-sn-glycero-3-phospho-1'-(3'-O-L-lysyl)-sn-glycerol + tRNA(Lys). Functionally, catalyzes the transfer of a lysyl group from L-lysyl-tRNA(Lys) to membrane-bound phosphatidylglycerol (PG), which produces lysylphosphatidylglycerol (LPG), a major component of the bacterial membrane with a positive net charge. LPG synthesis contributes to bacterial virulence as it is involved in the resistance mechanism against cationic antimicrobial peptides (CAMP) produces by the host's immune system (defensins, cathelicidins) and by the competing microorganisms (bacteriocins). In fact, the modification of anionic phosphatidylglycerol with positively charged L-lysine results in repulsion of the peptides. This chain is Phosphatidylglycerol lysyltransferase (mprF), found in Staphylococcus epidermidis (strain ATCC 35984 / DSM 28319 / BCRC 17069 / CCUG 31568 / BM 3577 / RP62A).